The primary structure comprises 345 residues: Methionine import ATP-binding protein MetN (345 aa).

Residues 2–241 (IKLNNIXKIF…PKTELAQEFI (240 aa)) enclose the ABC transporter domain. 38–45 (GASGAGKS) provides a ligand contact to ATP.

This sequence belongs to the ABC transporter superfamily. Methionine importer (TC 3.A.1.24) family. As to quaternary structure, the complex is composed of two ATP-binding proteins (MetN), two transmembrane proteins (MetI) and a solute-binding protein (MetQ).

It localises to the cell inner membrane. It carries out the reaction L-methionine(out) + ATP + H2O = L-methionine(in) + ADP + phosphate + H(+). It catalyses the reaction D-methionine(out) + ATP + H2O = D-methionine(in) + ADP + phosphate + H(+). Part of the ABC transporter complex MetNIQ involved in methionine import. Responsible for energy coupling to the transport system. The protein is Methionine import ATP-binding protein MetN of Haemophilus influenzae (strain ATCC 51907 / DSM 11121 / KW20 / Rd).